The chain runs to 264 residues: MNRIEERLAALKEEGKKAFITYTTAGLPDYDTTKKIMFAQEKAGIDIMEIGVPFSDPIADGPVIQDASFKAIQNGASLEGIFTMMGKVRKAGLNSPVVFMLYYNTVYHYGVENFVNKCIENGVDGLIIPDLPFEEQGEIKDVLAKNEKSPILIQLVSPVSKGRIPMLLENARGFVYCVSQMGVTGKGANFHSQIREYLTEVKKESKIPVMMGFGIRTAADVAPLEDIIDGAIVGSHFIKLLEANNYSEEAATDYVATFKKELNA.

Residues E49 and D60 each act as proton acceptor in the active site.

The protein belongs to the TrpA family. As to quaternary structure, tetramer of two alpha and two beta chains.

The catalysed reaction is (1S,2R)-1-C-(indol-3-yl)glycerol 3-phosphate + L-serine = D-glyceraldehyde 3-phosphate + L-tryptophan + H2O. It participates in amino-acid biosynthesis; L-tryptophan biosynthesis; L-tryptophan from chorismate: step 5/5. In terms of biological role, the alpha subunit is responsible for the aldol cleavage of indoleglycerol phosphate to indole and glyceraldehyde 3-phosphate. The protein is Tryptophan synthase alpha chain of Lachnospira eligens (strain ATCC 27750 / DSM 3376 / VPI C15-48 / C15-B4) (Eubacterium eligens).